We begin with the raw amino-acid sequence, 125 residues long: Phosphoribosyl-AMP cyclohydrolase (125 aa).

D74 contributes to the Mg(2+) binding site. Zn(2+) is bound at residue C75. Residues D76 and D78 each coordinate Mg(2+). The Zn(2+) site is built by C92 and C99.

Belongs to the PRA-CH family. In terms of assembly, homodimer. Mg(2+) is required as a cofactor. The cofactor is Zn(2+).

The protein localises to the cytoplasm. It catalyses the reaction 1-(5-phospho-beta-D-ribosyl)-5'-AMP + H2O = 1-(5-phospho-beta-D-ribosyl)-5-[(5-phospho-beta-D-ribosylamino)methylideneamino]imidazole-4-carboxamide. Its pathway is amino-acid biosynthesis; L-histidine biosynthesis; L-histidine from 5-phospho-alpha-D-ribose 1-diphosphate: step 3/9. In terms of biological role, catalyzes the hydrolysis of the adenine ring of phosphoribosyl-AMP. The chain is Phosphoribosyl-AMP cyclohydrolase from Desulfatibacillum aliphaticivorans.